A 404-amino-acid chain; its full sequence is Probable ketol-acid reductoisomerase, mitochondrial (404 aa).

One can recognise a KARI N-terminal Rossmann domain in the interval 63–253 (TKENVWERSD…AVGSGFIYQT (191 aa)). Residues 91-100 (GYGSQGHGQG), 115-120 (RKDGAS), and 153-157 (SDAAQ) contribute to the NADP(+) site. The active site involves histidine 178. The 148-residue stretch at 254–401 (TFKKEVISDL…EVVRSLRPEH (148 aa)) folds into the KARI C-terminal knotted domain. Serine 261 is modified (phosphoserine). Aspartate 262, glutamate 266, glutamate 298, and glutamate 302 together coordinate Mg(2+). Serine 324 contacts substrate.

It belongs to the ketol-acid reductoisomerase family. It depends on Mg(2+) as a cofactor.

It localises to the mitochondrion. The catalysed reaction is (2R)-2,3-dihydroxy-3-methylbutanoate + NADP(+) = (2S)-2-acetolactate + NADPH + H(+). The enzyme catalyses (2R,3R)-2,3-dihydroxy-3-methylpentanoate + NADP(+) = (S)-2-ethyl-2-hydroxy-3-oxobutanoate + NADPH + H(+). Its pathway is amino-acid biosynthesis; L-isoleucine biosynthesis; L-isoleucine from 2-oxobutanoate: step 2/4. It participates in amino-acid biosynthesis; L-valine biosynthesis; L-valine from pyruvate: step 2/4. The sequence is that of Probable ketol-acid reductoisomerase, mitochondrial (ilv5) from Schizosaccharomyces pombe (strain 972 / ATCC 24843) (Fission yeast).